A 348-amino-acid polypeptide reads, in one-letter code: 3-isopropylmalate dehydrogenase (348 aa).

Position 76–87 (76–87 (GPKWTDPNNRPE)) interacts with NAD(+). Arg-94, Arg-104, Arg-132, and Asp-217 together coordinate substrate. Residues Asp-217, Asp-241, and Asp-245 each contribute to the Mg(2+) site. 275-287 (GSAPDIAGKNVAN) provides a ligand contact to NAD(+).

This sequence belongs to the isocitrate and isopropylmalate dehydrogenases family. LeuB type 1 subfamily. In terms of assembly, homodimer. It depends on Mg(2+) as a cofactor. Requires Mn(2+) as cofactor.

Its subcellular location is the cytoplasm. It catalyses the reaction (2R,3S)-3-isopropylmalate + NAD(+) = 4-methyl-2-oxopentanoate + CO2 + NADH. Its pathway is amino-acid biosynthesis; L-leucine biosynthesis; L-leucine from 3-methyl-2-oxobutanoate: step 3/4. In terms of biological role, catalyzes the oxidation of 3-carboxy-2-hydroxy-4-methylpentanoate (3-isopropylmalate) to 3-carboxy-4-methyl-2-oxopentanoate. The product decarboxylates to 4-methyl-2 oxopentanoate. The sequence is that of 3-isopropylmalate dehydrogenase from Staphylococcus aureus (strain NCTC 8325 / PS 47).